The sequence spans 82 residues: Chaplin-E (82 aa).

The signal sequence occupies residues 1 to 27 (MKNLKKAAAVTMVAGGLIAAGAGMASA). In terms of domain architecture, Chaplin spans 41–81 (SPGVASGNLVQAPIHIPVNAVGNSVNVIGVLNPAFGNLGVN).

Belongs to the chaplin family. Short chaplin subfamily.

It is found in the cell surface. The protein resides in the secreted. Its subcellular location is the cell wall. It localises to the fimbrium. Functionally, one of 8 partially redundant surface-active proteins required for efficient formation of aerial mycelium; the short chaplins assemble into a hydrophobic, amyloidal fibrillar surface layer that envelopes and protects aerial hyphae and spores, presumably anchored to the long chaplins. Chaplins have an overlapping function with the surface-active SapB peptide; chaplins are essential on minimal medium while on rich medium both chaplins and SapB are required for efficient aerial hyphae formation. Chaplins are also involved in cell attachment to a hydrophobic surface. Forms amyloid fibrils in vitro probably composed of stacked beta-sheets, at low extracellular concentrations individually restores the ability to form aerial hyphae to a chaplin-deficient strain, but does so less well than other short chaplins. A small chaplin extract (ChpD, ChpE, ChpF, ChpG and ChpH) self-assembles into 2 different amyloids; small fibrils at the air-water interface form an amphipathic membrane that resembles spore-surface structures involved in aerial hyphae formation, and hydrophilic fibrils in solution that resemble the fibers that attach cells to a hydrophobic surface. At the air-water interface the hydrophilic surface is in contact with water (probably equivalent to the peptidoglycan layer), while the hydrophobic face is exposed to the air, making the surface of the aerial hyphae hydrophobic. A minimal chaplin strain capable of forming aerial mycelium/hyphae on minimal medium contains ChpC, ChpE and ChpH. The strain also has restored rodlet formation on the hyphae surface. A second strain with ChpA, ChpD and ChpE makes slightly less robust hyphae. This essential chaplin may coordinate the assembly and/or polymerization of the other chaplins. A small chaplin extract applied to a chaplin-deficient strain restores aerial hyphae formation. The small chaplin extract forms an amyloid-like structure similar to that seen on the surface of cells without rodlets (rdlA-rdlB deletions), and is highly surface active, reducing surface tension from 72 to 26 mJ/m(2), which probably allows escape of hyphae from an aqueous environment into air. In Streptomyces coelicolor (strain ATCC BAA-471 / A3(2) / M145), this protein is Chaplin-E.